A 377-amino-acid chain; its full sequence is Chaperone protein DnaJ (377 aa).

Residues 5–70 (DYYEVLGVSR…DKKAAYDQFG (66 aa)) form the J domain. A CR-type zinc finger spans residues 133-211 (GLTKELRIPT…CHGDGRVEKS (79 aa)). The Zn(2+) site is built by Cys-146, Cys-149, Cys-163, Cys-166, Cys-185, Cys-188, Cys-199, and Cys-202. CXXCXGXG motif repeat units lie at residues 146 to 153 (CDLCEGSG), 163 to 170 (CGTCHGQG), 185 to 192 (CPTCHGRG), and 199 to 206 (CTKCHGDG).

Belongs to the DnaJ family. In terms of assembly, homodimer. The cofactor is Zn(2+).

Its subcellular location is the cytoplasm. Participates actively in the response to hyperosmotic and heat shock by preventing the aggregation of stress-denatured proteins and by disaggregating proteins, also in an autonomous, DnaK-independent fashion. Unfolded proteins bind initially to DnaJ; upon interaction with the DnaJ-bound protein, DnaK hydrolyzes its bound ATP, resulting in the formation of a stable complex. GrpE releases ADP from DnaK; ATP binding to DnaK triggers the release of the substrate protein, thus completing the reaction cycle. Several rounds of ATP-dependent interactions between DnaJ, DnaK and GrpE are required for fully efficient folding. Also involved, together with DnaK and GrpE, in the DNA replication of plasmids through activation of initiation proteins. The polypeptide is Chaperone protein DnaJ (Shewanella baltica (strain OS223)).